The chain runs to 92 residues: Small ribosomal subunit protein uS19 (92 aa).

This sequence belongs to the universal ribosomal protein uS19 family.

In terms of biological role, protein S19 forms a complex with S13 that binds strongly to the 16S ribosomal RNA. This is Small ribosomal subunit protein uS19 from Vibrio campbellii (strain ATCC BAA-1116).